The chain runs to 366 residues: MSRPRNNPQTSSPQDSTKDGSSFHYFQGRFELSGKSRQYPADALEPQPGIGDVKVIEKATKSMLDPAQRSHFYLVTPSLVFLCFIFDGLHKALLSVGVSKRSNIVIGNENKETGTLYASKFEDVLPTFTALEMSSILRHCCDLIGIAAGSSDPICTNSLQVQRQFKAMMISIGRPLHSESADLLISYNAGPAIDWINSRPWVGGLMFTFLFGEFESPACELLDQVKVVASKAQMMTYYTVRMFLDQCVDGSTALPAVVLEIPVFEQKKPLAKKVLGDFFEFGGVLRHPVIGVLSPQMFPNLATAANYWAKRRNSTFSGFEALDIIPGSTITFPVLQMASAQKISRGSDMDPYTLNILRGYGISGFE.

Residues 1-15 (MSRPRNNPQTSSPQD) are compositionally biased toward polar residues. A disordered region spans residues 1 to 22 (MSRPRNNPQTSSPQDSTKDGSS).

In terms of tissue distribution, expression detected by RT-PCR in a few cell lines, including OL, HEK293T and MOLT-4. Not observed in HeLa cells.

Functionally, may act as an RNA-binding protein. Highly homologous to the bornavirus nucleocapsid N protein that binds viral RNA and oligomerizes. The sequence is that of Endogenous Bornavirus-like nucleoprotein 1 (EBLN1) from Homo sapiens (Human).